The sequence spans 419 residues: MASTFSKLLTGRNASLLFATLGTGALTTGYLLNKQNVCAAAREQHKLFPPSADYPDLRKHNNCMAECLTPAIYAKLRNKVTPSGYTLDQCIQTGVDNPGHPFIKTVGMVAGDEESYEVFADLFDPVIKLRHNGYDPRVMKHPTDLDASKITQGQFDERYVLSSRVRTGRSIRGLSLPPACSRAELREVENVAITALEGLKGDLAGRYYKLSEMTEQDQQRLIDDHFLFDKPVSPLLTCAGMARDWPDARGIWHNYDKTFLIWINEEDHTRVISMEKGGNMKRVFERFCRGLKEVERLIQERGWEFMWNERLGYILTCPSNLGTGLRAGVHVRIPKLSKDPRFSKILENLRLQKRGTGGVDTAAVADVYDISNIDRIGRSEVELVQIVIDGVNYLVDCEKKLERGQDIKVPPPLPQFGKK.

A mitochondrion-targeting transit peptide spans 1-39 (MASTFSKLLTGRNASLLFATLGTGALTTGYLLNKQNVCA). The interval 40-64 (AAREQHKLFPPSADYPDLRKHNNCM) is cardiolipin-binding. Residues 46 to 132 (KLFPPSADYP…FDPVIKLRHN (87 aa)) enclose the Phosphagen kinase N-terminal domain. Residues 159–401 (YVLSSRVRTG…NYLVDCEKKL (243 aa)) enclose the Phosphagen kinase C-terminal domain. Residues 162 to 166 (SSRVR) and His225 contribute to the ATP site. Tyr255 is subject to Phosphotyrosine. Residues Arg270, Arg326, 354-359 (RGTGGV), and Asp369 each bind ATP. Thr356 bears the Phosphothreonine mark.

It belongs to the ATP:guanido phosphotransferase family. Exists as an octamer composed of four CKMT2 homodimers.

It localises to the mitochondrion inner membrane. The enzyme catalyses creatine + ATP = N-phosphocreatine + ADP + H(+). Reversibly catalyzes the transfer of phosphate between ATP and various phosphogens (e.g. creatine phosphate). Creatine kinase isoenzymes play a central role in energy transduction in tissues with large, fluctuating energy demands, such as skeletal muscle, heart, brain and spermatozoa. In Bos taurus (Bovine), this protein is Creatine kinase S-type, mitochondrial (CKMT2).